The chain runs to 587 residues: MSSVNKDTIHVAERSLHKEHLTEGGNMAFHNHLNDFAHIEDPLERRRLALESIDDEGFGWQQVKTISIAGVGFLTDSYDIFAINLGITMMSYVYWHGSMPGPSQTLLKVSTSVGTVIGQFGFGTLADIVGRKRIYGMELIIMIVCTILQTTVAHSPAINFVAVLTFYRIVMGIGIGGDYPLSSIITSEFATTKWRGAIMGAVFANQAWGQISGGIIALILVAAYKGELEYANSGAECDARCQKACDQMWRILIGLGTVLGLACLYFRLTIPESPRYQLDVNAKLELAAAAQEQDGEKKIHDTSDEDMAINGLERASTAVESLDNHPPKASFKDFCRHFGQWKYGKILLGTAGSWFTLDVAFYGLSLNSAVILQTIGYAGSKNVYKKLYDTAVGNLILICAGSLPGYWVSVFTVDIIGRKPIQLAGFIILTALFCVIGFAYHKLGDHGLLALYVICQFFQNFGPNTTTFIVPGECFPTRYRSTAHGISAASGKVGAIIAQTALGTLIDHNCARDGKPTNCWLPHVMEIFALFMLLGIFTTLLIPETKRKTLEEINELYHDEIDPATLNFRNKNNDIESSSPSQLQHEA.

Residues 1–67 (MSSVNKDTIH…FGWQQVKTIS (67 aa)) lie on the Extracellular side of the membrane. A Glycyl lysine isopeptide (Lys-Gly) (interchain with G-Cter in ubiquitin) cross-link involves residue Lys-6. The helical transmembrane segment at 68-88 (IAGVGFLTDSYDIFAINLGIT) threads the bilayer. The Cytoplasmic segment spans residues 89–108 (MMSYVYWHGSMPGPSQTLLK). A helical membrane pass occupies residues 109–129 (VSTSVGTVIGQFGFGTLADIV). At 130-133 (GRKR) the chain is on the extracellular side. A helical transmembrane segment spans residues 134 to 154 (IYGMELIIMIVCTILQTTVAH). The Cytoplasmic segment spans residues 155–156 (SP). The chain crosses the membrane as a helical span at residues 157–177 (AINFVAVLTFYRIVMGIGIGG). The Extracellular segment spans residues 178-201 (DYPLSSIITSEFATTKWRGAIMGA). Residues 202–222 (VFANQAWGQISGGIIALILVA) traverse the membrane as a helical segment. The Cytoplasmic segment spans residues 223–250 (AYKGELEYANSGAECDARCQKACDQMWR). The helical transmembrane segment at 251-271 (ILIGLGTVLGLACLYFRLTIP) threads the bilayer. Over 272 to 345 (ESPRYQLDVN…RHFGQWKYGK (74 aa)) the chain is Extracellular. A Glycyl lysine isopeptide (Lys-Gly) (interchain with G-Cter in ubiquitin) cross-link involves residue Lys-298. Thr-302 is subject to Phosphothreonine. A phosphoserine mark is found at Ser-303 and Ser-316. Thr-317 carries the post-translational modification Phosphothreonine. At Ser-321 the chain carries Phosphoserine. A helical membrane pass occupies residues 346–366 (ILLGTAGSWFTLDVAFYGLSL). Residues 367 to 395 (NSAVILQTIGYAGSKNVYKKLYDTAVGNL) are Cytoplasmic-facing. The helical transmembrane segment at 396 to 416 (ILICAGSLPGYWVSVFTVDII) threads the bilayer. Residues 417–419 (GRK) are Extracellular-facing. Residues 420–440 (PIQLAGFIILTALFCVIGFAY) form a helical membrane-spanning segment. At 441 to 442 (HK) the chain is on the cytoplasmic side. Residues 443–463 (LGDHGLLALYVICQFFQNFGP) traverse the membrane as a helical segment. At 464–485 (NTTTFIVPGECFPTRYRSTAHG) the chain is on the extracellular side. A helical transmembrane segment spans residues 486 to 506 (ISAASGKVGAIIAQTALGTLI). At 507 to 522 (DHNCARDGKPTNCWLP) the chain is on the cytoplasmic side. The chain crosses the membrane as a helical span at residues 523-543 (HVMEIFALFMLLGIFTTLLIP). The Extracellular portion of the chain corresponds to 544–587 (ETKRKTLEEINELYHDEIDPATLNFRNKNNDIESSSPSQLQHEA). Residues 568–587 (FRNKNNDIESSSPSQLQHEA) form a disordered region. Phosphoserine occurs at positions 577, 579, and 581.

Belongs to the major facilitator superfamily. Phosphate:H(+) symporter (TC 2.A.1.9) family. In terms of assembly, may function as a monomer. Post-translationally, phosphorylated; phosphorylation increases after phosphate addition to the growth medium. Ubiquitinated in a phosphate-dependent manner; ubiquitination may influence the trafficking of PHO84 to the cell membrane and serve as a signal for endocytosis and internalization.

It localises to the cell membrane. The protein localises to the vacuole. It catalyses the reaction phosphate(in) + H(+)(in) = phosphate(out) + H(+)(out). The catalysed reaction is Mn(2+)(in) = Mn(2+)(out). It carries out the reaction Zn(2+)(in) = Zn(2+)(out). The enzyme catalyses Cu(2+)(in) = Cu(2+)(out). It catalyses the reaction Co(2+)(in) = Co(2+)(out). Its activity is regulated as follows. Transport activity is inhibited in the presence of the protonophore carbonylcyanide m-chlorophenylhydrazone. Transport activity is inhibited by glycerol-3-phosphate. Transport activity is inhibited by phosphonoacetic acid. Signaling activity is stimulated by glycerol-3-phosphate which acts as a nontransported PHO84 agonist that can trigger PKA signaling. Signaling activity is stimulated by arsenate. Its function is as follows. Proton-coupled high-affinity transporter for external inorganic phosphate. Acts as a transceptor, a membrane protein that in addition to its transporter activity also possesses receptor-like signaling activity; mediates activation of the protein kinase A (PKA) pathway targets during growth induction, triggered by phosphate addition to cells growth-arrested due to previous phosphate starvation. Is not an essential protein, since constitutive, low affinity phosphate transporters exist in yeast. Can function as a low affinity metal transporter that transports manganese, zinc, cobalt and copper. Plays a role in manganese homeostasis predominantly under manganese surplus conditions. This Saccharomyces cerevisiae (strain ATCC 204508 / S288c) (Baker's yeast) protein is Inorganic phosphate transporter PHO84 (PHO84).